The following is a 105-amino-acid chain: DNA-directed RNA polymerase subunit omega (105 aa).

Belongs to the RNA polymerase subunit omega family. The RNAP catalytic core consists of 2 alpha, 1 beta, 1 beta' and 1 omega subunit. When a sigma factor is associated with the core the holoenzyme is formed, which can initiate transcription.

The catalysed reaction is RNA(n) + a ribonucleoside 5'-triphosphate = RNA(n+1) + diphosphate. Functionally, promotes RNA polymerase assembly. Latches the N- and C-terminal regions of the beta' subunit thereby facilitating its interaction with the beta and alpha subunits. The protein is DNA-directed RNA polymerase subunit omega of Streptococcus uberis (strain ATCC BAA-854 / 0140J).